The following is a 329-amino-acid chain: Transcription factor TGA2.3 (329 aa).

The disordered stretch occupies residues 1–48; it reads MADMSPRTDTSTDDTDDNHMLEPGQLALAAASDSDRSKDKHEDQKTLR. A compositionally biased stretch (basic and acidic residues) spans 33-46; the sequence is DSDRSKDKHEDQKT. A bZIP domain is found at 43 to 87; the sequence is DQKTLRRLAQNREAARKSRLRKKAYVQQLENSRLKLTQLEQELQR. The segment at 45–65 is basic motif; that stretch reads KTLRRLAQNREAARKSRLRKK. A leucine-zipper region spans residues 71 to 85; sequence LENSRLKLTQLEQEL. In terms of domain architecture, DOG1 spans 110–326; the sequence is ALAFDMEYAR…RALSSLWLAR (217 aa).

Belongs to the bZIP family. Interacts with NPR1/NH1 and NPR3/NH3.

It localises to the nucleus. Its function is as follows. Transcriptional regulator involved in defense response. This is Transcription factor TGA2.3 from Oryza sativa subsp. japonica (Rice).